The chain runs to 110 residues: MLEKTMRMNYLYDFYQALLTPKQRSYMSLYYLDDYSLGEIAQQYEVSRQAVYDNIKRTEAMLEEYEKKLSLFQKFQKRKQLMNQLKDYVLQKYGEDKQLFDMIKELEELE.

It belongs to the UPF0122 family.

Functionally, might take part in the signal recognition particle (SRP) pathway. This is inferred from the conservation of its genetic proximity to ftsY/ffh. May be a regulatory protein. This chain is UPF0122 protein GWCH70_1086, found in Geobacillus sp. (strain WCH70).